We begin with the raw amino-acid sequence, 290 residues long: Probable proteasome subunit beta type-6 (290 aa).

Belongs to the peptidase T1B family. In terms of assembly, the 26S proteasome consists of a 20S proteasome core and two 19S regulatory subunits. The 20S proteasome core is composed of 28 subunits that are arranged in four stacked rings, resulting in a barrel-shaped structure. The two end rings are each formed by seven alpha subunits, and the two central rings are each formed by seven beta subunits. The catalytic chamber with the active sites is on the inside of the barrel.

The protein localises to the cytoplasm. It is found in the nucleus. Functionally, non-catalytic component of the proteasome which degrades poly-ubiquitinated proteins in the cytoplasm and in the nucleus. It is essential for the regulated turnover of proteins and for the removal of misfolded proteins. The proteasome is a multicatalytic proteinase complex that is characterized by its ability to cleave peptides with Arg, Phe, Tyr, Leu, and Glu adjacent to the leaving group at neutral or slightly basic pH. It has an ATP-dependent proteolytic activity. This chain is Probable proteasome subunit beta type-6 (PRE7), found in Encephalitozoon cuniculi (strain GB-M1) (Microsporidian parasite).